Here is a 968-residue protein sequence, read N- to C-terminus: RNA polymerase-associated protein RapA (968 aa).

The 170-residue stretch at 163-332 (EVGRRFAPRV…FARLRLLDPD (170 aa)) folds into the Helicase ATP-binding domain. Residue 176 to 183 (DEVGLGKT) coordinates ATP. The DEAH box signature appears at 278–281 (DEAH). A Helicase C-terminal domain is found at 491–641 (RVDWLINFLK…AFEQTCPSGH (151 aa)).

This sequence belongs to the SNF2/RAD54 helicase family. RapA subfamily. As to quaternary structure, interacts with the RNAP. Has a higher affinity for the core RNAP than for the holoenzyme. Its ATPase activity is stimulated by binding to RNAP.

Transcription regulator that activates transcription by stimulating RNA polymerase (RNAP) recycling in case of stress conditions such as supercoiled DNA or high salt concentrations. Probably acts by releasing the RNAP, when it is trapped or immobilized on tightly supercoiled DNA. Does not activate transcription on linear DNA. Probably not involved in DNA repair. The polypeptide is RNA polymerase-associated protein RapA (Shewanella sediminis (strain HAW-EB3)).